The following is a 137-amino-acid chain: Glutamyl-tRNA(Gln) amidotransferase subunit C, chloroplastic/mitochondrial (137 aa).

Belongs to the GatC family. Subunit of the heterotrimeric GatCAB amidotransferase (AdT) complex, composed of A, B and C subunits.

Its subcellular location is the mitochondrion. The protein localises to the plastid. It localises to the chloroplast. It catalyses the reaction L-glutamyl-tRNA(Gln) + L-glutamine + ATP + H2O = L-glutaminyl-tRNA(Gln) + L-glutamate + ADP + phosphate + H(+). In terms of biological role, allows the formation of correctly charged Gln-tRNA(Gln) through the transamidation of misacylated Glu-tRNA(Gln) in chloroplasts and mitochondria. The reaction takes place in the presence of glutamine and ATP through an activated gamma-phospho-Glu-tRNA(Gln). The sequence is that of Glutamyl-tRNA(Gln) amidotransferase subunit C, chloroplastic/mitochondrial from Vitis vinifera (Grape).